Consider the following 1063-residue polypeptide: MLSINRNAGMFVLPDFKQIQIDSFRHFLTDLLRLELQRFGTIKHANQQLEFKLLGELYRLEIPKFNEREAVYQSATYSSNLYAPAYLVDKKRGIIQKQTVFLGSIPLMSARGTFVIRGVSRCIVSQLLRSPGIYYTLSVQGVYTATIICNSGKSFKLELDRQGCLWVRVGRNSKAPLLLLLIALGLEMRYIPPMIVQRTKKLNQLLLCVEDAKIDLCKRLKLKQKTTQIELGVTDPIYSLFLKPYELGRMGRLNLNKRLNLRVSEFEILLRSQDLIVASDYLVQVSNGIGSLDDIDDLKHKRVKWVSDLFCVQLNMALKKLNVAVHTNLNKMEARISRMSLKSVVSSNAIATTFFRFVASYQLSQFLDQTNPLSEIVHKRKLSLLGPGGLTPRTARFRVRDIHPSQYGRICPVQTAEGQNAGVVNSFTICAHIGDNGAIKTSLYKVCTNSMQGHVIDMLPGEDEYSTIATESCLVVANSSNQFQSIPAQHRREFVTLRWDEIGFRNTLPVHSFSVGVVLIPFLEHDDATRALMGSNMQRQAVPLLKLERPIVGTGIESQVALDSGTVITAVQECKIHNVDATQIAYVPKDSFELLYINLLNYERSNNATCLHQRPIVECGETVQKGQLIADGSATVDGELALGKNVLVAYMPWEGYNFEDAVLINERLIYEDVYTSLHIERYEAEARETNQAIETITKQIPHLNAHVLRHLDETGVVSLGAWVETGDVLVGKLTAKQSEGLLHTPESKLLQDILGVQAFGTQDTCLKVPTRGEGRVIDVRWITRDNHLLGHRKVIHVYILQERKIQVGDKVAGRHGNKGVVSRILPRQDMPYLQDGTPVDMVLSPLGVPSRMNVGQVFECLLGLAGGYLNQHYRIMPFDERYGRESSRKLVFSELYKASQTTNYPWIFEPDSPGKSRLFDGRTGEVFNQPVTVGRAYMFKLIHQVDDKIHARSTGPYALVTQQPVRGRSRQGGQRVGEMEVWAFQGFGAACVLQELLTTKSDHATARAEAPNAIVTGNLVPKPIGTSDCLGVLIRELQCLGIQLDHTMLSQHNMIQYPNLNEE.

The protein belongs to the RNA polymerase beta chain family. As to quaternary structure, in plastids the minimal PEP RNA polymerase catalytic core is composed of four subunits: alpha, beta, beta', and beta''. When a (nuclear-encoded) sigma factor is associated with the core the holoenzyme is formed, which can initiate transcription.

The protein localises to the plastid. Its subcellular location is the chloroplast. It catalyses the reaction RNA(n) + a ribonucleoside 5'-triphosphate = RNA(n+1) + diphosphate. Its function is as follows. DNA-dependent RNA polymerase catalyzes the transcription of DNA into RNA using the four ribonucleoside triphosphates as substrates. This Zygnema circumcarinatum (Green alga) protein is DNA-directed RNA polymerase subunit beta.